The primary structure comprises 136 residues: MSIKQMPGRVLISLLLSVTGLLSGCASHNENASLLAKKQAQNISQNLPIKSAGYTLVLAQSSGTTVKMTIISEAGTQTTQTPDAFLTSYQRQMCADPTVKLMITEGINYSITINDTRTGNQYQRKLDRTTCGIVKA.

Residues Met-1–Gly-24 form the signal peptide. Cys-25 carries the N-palmitoyl cysteine lipid modification. Cys-25 is lipidated: S-diacylglycerol cysteine.

This sequence belongs to the GspS/AspS pilotin family.

It is found in the cell outer membrane. In terms of biological role, involved in a type II secretion system (T2SS, formerly general secretion pathway, GSP) for the export of folded proteins across the outer membrane. In a functional T2SS this subunit helps assemble the outer membrane channel. The polypeptide is Lipoprotein YghG (yghG) (Escherichia coli (strain K12)).